The chain runs to 306 residues: Aspartate carbamoyltransferase catalytic subunit (306 aa).

Carbamoyl phosphate is bound by residues arginine 55 and threonine 56. Lysine 84 is an L-aspartate binding site. Carbamoyl phosphate contacts are provided by arginine 105, histidine 133, and glutamine 136. 2 residues coordinate L-aspartate: arginine 166 and arginine 227. Leucine 265 and proline 266 together coordinate carbamoyl phosphate.

It belongs to the aspartate/ornithine carbamoyltransferase superfamily. ATCase family. Heterododecamer (2C3:3R2) of six catalytic PyrB chains organized as two trimers (C3), and six regulatory PyrI chains organized as three dimers (R2).

It carries out the reaction carbamoyl phosphate + L-aspartate = N-carbamoyl-L-aspartate + phosphate + H(+). The protein operates within pyrimidine metabolism; UMP biosynthesis via de novo pathway; (S)-dihydroorotate from bicarbonate: step 2/3. Its function is as follows. Catalyzes the condensation of carbamoyl phosphate and aspartate to form carbamoyl aspartate and inorganic phosphate, the committed step in the de novo pyrimidine nucleotide biosynthesis pathway. The chain is Aspartate carbamoyltransferase catalytic subunit from Neisseria meningitidis serogroup C / serotype 2a (strain ATCC 700532 / DSM 15464 / FAM18).